The chain runs to 215 residues: Putative ribosome biogenesis protein slx9-like (215 aa).

3 disordered regions span residues 49–121 (IIPS…GLGM), 133–157 (DSMK…MSLK), and 189–215 (LQNQ…LKRK).

The protein belongs to the SLX9 family.

It is found in the nucleus. The protein resides in the nucleolus. Functionally, involved in ribosome biogenesis. This is Putative ribosome biogenesis protein slx9-like from Dictyostelium discoideum (Social amoeba).